The following is a 308-amino-acid chain: Putative T-box protein 30/42 (308 aa).

Positions 11-192 (MSNEELWKER…KHSTFGNRSE (182 aa)) form a DNA-binding region, T-box. The interval 186 to 220 (TFGNRSEGGIKRKTSDAAGQLPSKRSSKKPVKKDV) is disordered.

The protein resides in the nucleus. Functionally, involved in the regulatory network to control embryonic patterning and morphogenesis. Implicated in negatively regulating vab-7 expression at the anterior of embryos. In Caenorhabditis elegans, this protein is Putative T-box protein 30/42 (tbx-30).